Here is a 123-residue protein sequence, read N- to C-terminus: WAP four-disulfide core domain protein 5 (123 aa).

Residues 1-24 (MRTQSLLLLGALLAVGSQLPAVFG) form the signal peptide. 2 WAP domains span residues 27–74 (KGEK…VPRV) and 75–121 (SVKL…RDPA). Intrachain disulfides connect cysteine 34-cysteine 62, cysteine 41-cysteine 66, cysteine 49-cysteine 61, cysteine 55-cysteine 70, cysteine 81-cysteine 109, cysteine 88-cysteine 113, cysteine 96-cysteine 108, and cysteine 102-cysteine 117.

It localises to the secreted. In terms of biological role, putative acid-stable proteinase inhibitor. In Gorilla gorilla gorilla (Western lowland gorilla), this protein is WAP four-disulfide core domain protein 5 (WFDC5).